Consider the following 381-residue polypeptide: GDP-mannose transporter (381 aa).

At 1–40 (MADDKKTNDYTVEMDKLDQGSKNFEAPLPPVQPRSAPNAQ) the chain is on the cytoplasmic side. The chain crosses the membrane as a helical span at residues 41–61 (LANNPILPVLAYCGSSIMMTV). Residues 62-71 (MNKYVLSGTD) are Lumenal-facing. Residues 72–92 (FNLNFLLLCVQSIVCIVAIQT) form a helical membrane-spanning segment. Over 93 to 110 (CKASKLITYRDFNADEAK) the chain is Cytoplasmic. Residues 111-127 (KWFPITLLLIGMIYTGS) form a helical membrane-spanning segment. Residues 128–134 (KALQFLS) are Lumenal-facing. The helical transmembrane segment at 135-151 (IPVYTIFKNLTIILIAY) threads the bilayer. Residues 152–160 (GEVLWFGGS) lie on the Cytoplasmic side of the membrane. A helical transmembrane segment spans residues 161–182 (VTGLTLFSFGLMVLSSIIAAWA). The Lumenal segment spans residues 183 to 200 (DIKHAVESSGDATAKVST). Residues 201–221 (LNAGYIWMLINCLCTSSYVLG) form a helical membrane-spanning segment. Topologically, residues 222 to 233 (MRKRIKLTNFKD) are cytoplasmic. A helical membrane pass occupies residues 234 to 254 (FDTMFYNNLLSIPVLLVLTFL). At 255–274 (MEDWSSANITRNFPPADRNG) the chain is on the lumenal side. Asn-262 carries N-linked (GlcNAc...) asparagine glycosylation. The helical transmembrane segment at 275–295 (IMFAMILSGLSSVFISYTSAW) threads the bilayer. Residues 296–303 (CVRVTSST) are Cytoplasmic-facing. The helical transmembrane segment at 304–324 (TYSMVGALNKLPIAVSGLIFF) threads the bilayer. Residues 325–327 (DAP) are Lumenal-facing. Residues 328–348 (VTFPSVSAIVVGFVSGIVYAV) form a helical membrane-spanning segment. At 349 to 381 (AKIKQNAKPKTGVLPTSNPVSASSQSMRDSLRS) the chain is on the cytoplasmic side. The interval 362–381 (LPTSNPVSASSQSMRDSLRS) is disordered.

It belongs to the TPT transporter family. SLC35D subfamily. In terms of assembly, homooligomer.

It is found in the golgi apparatus membrane. It localises to the cytoplasmic vesicle membrane. The protein resides in the endoplasmic reticulum membrane. Functionally, involved in the import of GDP-mannose from the cytoplasm into the Golgi lumen. The chain is GDP-mannose transporter (gmt1) from Aspergillus clavatus (strain ATCC 1007 / CBS 513.65 / DSM 816 / NCTC 3887 / NRRL 1 / QM 1276 / 107).